Here is a 2390-residue protein sequence, read N- to C-terminus: Spectrin beta chain, non-erythrocytic 2 (2390 aa).

An N-acetylserine modification is found at serine 2. Positions 2-278 are actin-binding; that stretch reads SSTLSPTDFD…IITYVATYYH (277 aa). A phosphoserine mark is found at serine 6 and serine 31. Calponin-homology (CH) domains follow at residues 57-161 and 176-281; these read AVQK…LRFQ and KSAK…HYFS. Spectrin repeat units follow at residues 306-414, 427-527, 532-639, 642-744, 749-849, and 855-954; these read LVEK…LALR, AARF…RERL, ELQK…RLEE, RLWR…QRLA, LYQF…RALE, and YTML…KAAL. Residue serine 959 is modified to Phosphoserine. 11 Spectrin repeats span residues 960-1063, 1066-1169, 1174-1262, 1279-1379, 1384-1485, 1489-1586, 1589-1692, 1696-1797, 1801-1904, 1910-2010, and 2017-2076; these read IQNY…SLGE, RLQD…GRLA, FQGF…RHKK, EQQH…ARSL, RAEL…RRLQ, EQHQ…RLED, RAQQ…RLQE, LCQL…GQVL, YELQ…QLLL, FRFF…DWLQ, and VFGR…EKLT. Serine 1073 carries the post-translational modification Phosphoserine. Positions 2081-2096 are enriched in basic and acidic residues; that stretch reads REKERKRKREEEERRK. Disordered stretches follow at residues 2081-2222 and 2331-2390; these read REKE…EQME and SSAS…KKNK. Polar residues predominate over residues 2116–2125; sequence QTASDTTWDG. Phosphoserine is present on residues serine 2171 and serine 2199. Residues 2218–2328 form the PH domain; the sequence is QEQMEGMLCR…WLRVVNAAIA (111 aa). A Phosphothreonine modification is found at threonine 2354. Position 2359 is a phosphoserine (serine 2359). Over residues 2370 to 2383 the composition is skewed to basic and acidic residues; the sequence is RSKDGREREREKRF.

The protein belongs to the spectrin family. As to expression, highly expressed in brain, kidney, pancreas, and liver, and at lower levels in lung and placenta.

The protein localises to the cytoplasm. Its subcellular location is the cytoskeleton. The protein resides in the cell cortex. Functionally, probably plays an important role in neuronal membrane skeleton. This is Spectrin beta chain, non-erythrocytic 2 (SPTBN2) from Homo sapiens (Human).